Here is a 419-residue protein sequence, read N- to C-terminus: Gamma-glutamyl phosphate reductase (419 aa).

This sequence belongs to the gamma-glutamyl phosphate reductase family.

The protein resides in the cytoplasm. It catalyses the reaction L-glutamate 5-semialdehyde + phosphate + NADP(+) = L-glutamyl 5-phosphate + NADPH + H(+). Its pathway is amino-acid biosynthesis; L-proline biosynthesis; L-glutamate 5-semialdehyde from L-glutamate: step 2/2. Catalyzes the NADPH-dependent reduction of L-glutamate 5-phosphate into L-glutamate 5-semialdehyde and phosphate. The product spontaneously undergoes cyclization to form 1-pyrroline-5-carboxylate. This is Gamma-glutamyl phosphate reductase from Marinomonas sp. (strain MWYL1).